We begin with the raw amino-acid sequence, 1007 residues long: Serine/threonine-protein kinase PRP4 homolog (1007 aa).

Positions 1–104 are disordered; that stretch reads MAATEPPSLR…PAKRTKLDDL (104 aa). A2 carries the N-acetylalanine modification. S8, S21, S24, and S33 each carry phosphoserine. 2 stretches are compositionally biased toward basic residues: residues 40–60 and 68–82; these read KHSR…KHKH and KKHK…HKRK. Residues 83 to 92 are compositionally biased toward basic and acidic residues; the sequence is EVLDASDKEG. Phosphoserine occurs at positions 88 and 94. An N6-acetyllysine; alternate modification is found at K100. Residue K100 forms a Glycyl lysine isopeptide (Lys-Gly) (interchain with G-Cter in SUMO2); alternate linkage. Residue K112 forms a Glycyl lysine isopeptide (Lys-Gly) (interchain with G-Cter in SUMO2) linkage. Residue K118 forms a Glycyl lysine isopeptide (Lys-Gly) (interchain with G-Cter in SUMO2); alternate linkage. K118 participates in a covalent cross-link: Glycyl lysine isopeptide (Lys-Gly) (interchain with G-Cter in SUMO1); alternate. Residue S132 is modified to Phosphoserine. The residue at position 141 (Y141) is a Phosphotyrosine. Disordered stretches follow at residues 141-535 and 560-583; these read YESG…EDEE and NISV…SPDD. 3 positions are modified to phosphoserine: S143, S145, and S167. Positions 158-169 are enriched in low complexity; it reads GNRSSTRSSSTR. Glycyl lysine isopeptide (Lys-Gly) (interchain with G-Cter in SUMO2) cross-links involve residues K171 and K178. Basic residues-rich tracts occupy residues 180 to 203 and 215 to 231; these read SAKK…RKSK and RSKS…SKRS. A phosphoserine mark is found at S240, S242, S258, S278, S292, and S294. Residues 248–271 are compositionally biased toward basic and acidic residues; it reads RSQEKVGKARSPADEKIKSEEKGK. Basic and acidic residues predominate over residues 294–303; the sequence is SPVDLRDKSK. Residues 304–315 are compositionally biased toward basic residues; it reads DRRSRSKERKSK. The segment covering 316–325 has biased composition (basic and acidic residues); the sequence is RSEIDKEKKP. Phosphoserine occurs at positions 328, 354, 356, 366, and 368. Over residues 342 to 367 the composition is skewed to basic residues; that stretch reads PSRRPGRSPKRRSLSPKQRDKSRRSR. The residue at position 385 (T385) is a Phosphothreonine. Residue S387 is modified to Phosphoserine. Composition is skewed to basic and acidic residues over residues 395-408 and 415-429; these read RSLE…ERRR and RPRD…RSKD. Residues S427, S431, and S437 each carry the phosphoserine modification. Basic residues predominate over residues 438 to 497; the sequence is PSRRRSRSPIRRRSRSPLRRSRSPRRRSRSPRRRDRSRRSRSRLRRRSRSRGGHRRRSRS. Phosphoserine is present on residues S518, S519, S520, S565, S569, S576, S578, and S580. The segment covering 518-535 has biased composition (acidic residues); the sequence is SSSDDNLEDFDVEEEDEE. Residues 562–581 are compositionally biased toward low complexity; that stretch reads SVPSEPSSPQSSTRSRSPSP. Glycyl lysine isopeptide (Lys-Gly) (interchain with G-Cter in SUMO2) cross-links involve residues K593 and K659. In terms of domain architecture, Protein kinase spans 687–1003; that stretch reads YNVYGYTGQG…INQALQHAFI (317 aa). ATP-binding positions include 693 to 701 and K717; that span reads TGQGVFSNV. An N6-acetyllysine modification is found at K717. Residue D815 is the Proton acceptor of the active site. Residue Y849 is modified to Phosphotyrosine. S852 carries the phosphoserine modification.

Belongs to the protein kinase superfamily. CMGC Ser/Thr protein kinase family. As to quaternary structure, interacts with CLK1 C-terminus. Associates with the U5 snRNP and NCOR1 deacetylase complexes. Identified in the spliceosome C complex. In terms of processing, phosphorylated by CLK1. Autophosphorylated; phosphorylation inhibits interaction with its targets, such as PRPF6 or SMARCA4.

The protein localises to the nucleus. The protein resides in the chromosome. It localises to the centromere. Its subcellular location is the kinetochore. The enzyme catalyses L-seryl-[protein] + ATP = O-phospho-L-seryl-[protein] + ADP + H(+). It catalyses the reaction L-threonyl-[protein] + ATP = O-phospho-L-threonyl-[protein] + ADP + H(+). Functionally, serine/threonine kinase involved in spliceosomal assembly as well as mitosis and signaling regulation. Connects chromatin mediated regulation of transcription and pre-mRNA splicing. During spliceosomal assembly, interacts with and phosphorylates PRPF6 and PRPF31, components of the U4/U6-U5 tri-small nuclear ribonucleoprotein (snRNP), to facilitate the formation of the spliceosome B complex. Plays a role in regulating transcription and the spindle assembly checkpoint (SAC). Associates with U5 snRNP and NCOR1 deacetylase complexes which may allow a coordination of pre-mRNA splicing with chromatin remodeling events involved in transcriptional regulation. Associates and probably phosphorylates SMARCA4 and NCOR1. Phosphorylates SRSF1. Associates with kinetochores during mitosis and is necessary for recruitment and maintenance of the checkpoint proteins such as MAD1L1 and MAD12L1 at the kinetochores. Phosphorylates and regulates the activity of the transcription factors such as ELK1 and KLF13. Phosphorylates nuclear YAP1 and WWTR1/TAZ which induces nuclear exclusion and regulates Hippo signaling pathway, involved in tissue growth control. The chain is Serine/threonine-protein kinase PRP4 homolog (Prp4k) from Rattus norvegicus (Rat).